Consider the following 224-residue polypeptide: Orotate phosphoribosyltransferase (224 aa).

K29 contacts 5-phospho-alpha-D-ribose 1-diphosphate. 37–38 is an orotate binding site; the sequence is FF. 5-phospho-alpha-D-ribose 1-diphosphate contacts are provided by residues 75–76, R105, K106, K109, H111, and 130–138; these read YK and DDVITAGTS. T134 and R162 together coordinate orotate.

It belongs to the purine/pyrimidine phosphoribosyltransferase family. PyrE subfamily. As to quaternary structure, homodimer. It depends on Mg(2+) as a cofactor.

The enzyme catalyses orotidine 5'-phosphate + diphosphate = orotate + 5-phospho-alpha-D-ribose 1-diphosphate. It functions in the pathway pyrimidine metabolism; UMP biosynthesis via de novo pathway; UMP from orotate: step 1/2. In terms of biological role, catalyzes the transfer of a ribosyl phosphate group from 5-phosphoribose 1-diphosphate to orotate, leading to the formation of orotidine monophosphate (OMP). In Bordetella pertussis (strain Tohama I / ATCC BAA-589 / NCTC 13251), this protein is Orotate phosphoribosyltransferase.